We begin with the raw amino-acid sequence, 477 residues long: Protein translocase subunit SecY (477 aa).

10 helical membrane-spanning segments follow: residues 28–48, 67–89, 130–150, 165–185, 196–216, 234–254, 286–306, 329–349, 387–407, and 413–433; these read FMIS…LAII, FFSL…AVGI, IITL…ATNS, DFVA…VFLG, GITL…FIAA, AISF…TTFI, SAGV…VTIA, GIVL…YIQI, FIGA…SALI, and LSLG…FMSA.

Belongs to the SecY/SEC61-alpha family. Component of the Sec protein translocase complex. Heterotrimer consisting of SecY, SecE and SecG subunits. The heterotrimers can form oligomers, although 1 heterotrimer is thought to be able to translocate proteins. Interacts with the ribosome. Interacts with SecDF, and other proteins may be involved. Interacts with SecA.

It localises to the cell membrane. Functionally, the central subunit of the protein translocation channel SecYEG. Consists of two halves formed by TMs 1-5 and 6-10. These two domains form a lateral gate at the front which open onto the bilayer between TMs 2 and 7, and are clamped together by SecE at the back. The channel is closed by both a pore ring composed of hydrophobic SecY resides and a short helix (helix 2A) on the extracellular side of the membrane which forms a plug. The plug probably moves laterally to allow the channel to open. The ring and the pore may move independently. The protein is Protein translocase subunit SecY of Mycoplasma pneumoniae (strain ATCC 29342 / M129 / Subtype 1) (Mycoplasmoides pneumoniae).